We begin with the raw amino-acid sequence, 366 residues long: sn-glycerol-3-phosphate import ATP-binding protein UgpC (366 aa).

In terms of domain architecture, ABC transporter spans 4–235; sequence VTLRNVRKTY…PASTFVASFI (232 aa). Residue 37 to 44 participates in ATP binding; sequence GPSGCGKS.

Belongs to the ABC transporter superfamily. sn-glycerol-3-phosphate importer (TC 3.A.1.1.3) family. The complex is composed of two ATP-binding proteins (UgpC), two transmembrane proteins (UgpA and UgpE) and a solute-binding protein (UgpB).

It is found in the cell inner membrane. It catalyses the reaction sn-glycerol 3-phosphate(out) + ATP + H2O = sn-glycerol 3-phosphate(in) + ADP + phosphate + H(+). In terms of biological role, part of the ABC transporter complex UgpBAEC involved in sn-glycerol-3-phosphate (G3P) import. Responsible for energy coupling to the transport system. This Rhodopseudomonas palustris (strain BisB18) protein is sn-glycerol-3-phosphate import ATP-binding protein UgpC.